Consider the following 203-residue polypeptide: Somatotropin (203 aa).

Residues 1 to 17 (MDRVVLMLSVLSLGVSS) form the signal peptide. A Pyrrolidone carboxylic acid modification is found at Gln-18. Residue His-36 coordinates Zn(2+). The cysteines at positions 68 and 176 are disulfide-linked. Glu-185 provides a ligand contact to Zn(2+). A disulfide bridge links Cys-193 with Cys-201.

It belongs to the somatotropin/prolactin family.

The protein resides in the secreted. Growth hormone plays an important role in growth control and is involved in the regulation of several anabolic processes. Implicated as an osmoregulatory substance important for seawater adaptation. The chain is Somatotropin (gh) from Pagrus major (Red sea bream).